A 423-amino-acid chain; its full sequence is Imidazolonepropionase (423 aa).

Fe(3+)-binding residues include His-78 and His-80. The Zn(2+) site is built by His-78 and His-80. Positions 87, 150, and 183 each coordinate 4-imidazolone-5-propanoate. Tyr-150 is an N-formimidoyl-L-glutamate binding site. His-247 contributes to the Fe(3+) binding site. His-247 is a binding site for Zn(2+). Glu-250 contributes to the 4-imidazolone-5-propanoate binding site. Asp-322 lines the Fe(3+) pocket. Asp-322 provides a ligand contact to Zn(2+). The N-formimidoyl-L-glutamate site is built by Asn-324 and Gly-326. Residue Ser-327 participates in 4-imidazolone-5-propanoate binding.

It belongs to the metallo-dependent hydrolases superfamily. HutI family. Zn(2+) is required as a cofactor. Fe(3+) serves as cofactor.

Its subcellular location is the cytoplasm. The catalysed reaction is 4-imidazolone-5-propanoate + H2O = N-formimidoyl-L-glutamate. Its pathway is amino-acid degradation; L-histidine degradation into L-glutamate; N-formimidoyl-L-glutamate from L-histidine: step 3/3. Its function is as follows. Catalyzes the hydrolytic cleavage of the carbon-nitrogen bond in imidazolone-5-propanoate to yield N-formimidoyl-L-glutamate. It is the third step in the universal histidine degradation pathway. The sequence is that of Imidazolonepropionase from Bacillus anthracis (strain A0248).